The chain runs to 160 residues: Small ribosomal subunit protein uS9 (160 aa).

This sequence belongs to the universal ribosomal protein uS9 family.

The chain is Small ribosomal subunit protein uS9 from Rhodopseudomonas palustris (strain ATCC BAA-98 / CGA009).